Consider the following 402-residue polypeptide: Caspase-1 (402 aa).

The CARD domain occupies 1–91; it reads MADKVLRAKR…YLAEILELQS (91 aa). Residues 1–118 constitute a propeptide that is removed on maturation; sequence MADKVLRAKR…PFSSETKEKL (118 aa). Active-site residues include His-236 and Cys-284. Positions 297-314 are excised as a propeptide; it reads SVGNSEEGFLTDAIFEDD. Phosphoserine is present on Ser-301.

It belongs to the peptidase C14A family. Heterotetramer that consists of two anti-parallel arranged heterodimers, each one formed by a 20 kDa (Caspase-1 subunit p20) and a 10 kDa (Caspase-1 subunit p10) subunit. May be a component of the inflammasome, a protein complex which also includes PYCARD, CARD8 and NLRP2 and whose function would be the activation of pro-inflammatory caspases. Component of the AIM2 PANoptosome complex, a multiprotein complex that drives inflammatory cell death (PANoptosis). Both the p10 and p20 subunits interact with MEFV. Interacts with CARD17P/INCA and CARD18. Interacts with SERPINB1; this interaction regulates CASP1 activity. In terms of assembly, heterotetramer that consists of two anti-parallel arranged heterodimers, each one formed by a 20 kDa (Caspase-1 subunit p20) and a 10 kDa (Caspase-1 subunit p10) subunit. In terms of processing, the two subunits are derived from the precursor sequence by an autocatalytic mechanism. Ubiquitinated via 'Lys-11'-linked polyubiquitination. Deubiquitinated by USP8.

The protein localises to the cytoplasm. It localises to the cell membrane. The catalysed reaction is Strict requirement for an Asp residue at position P1 and has a preferred cleavage sequence of Tyr-Val-Ala-Asp-|-.. Thiol protease involved in a variety of inflammatory processes by proteolytically cleaving other proteins, such as the precursors of the inflammatory cytokines interleukin-1 beta (IL1B) and interleukin 18 (IL18) as well as the pyroptosis inducer Gasdermin-D (GSDMD), into active mature peptides. Plays a key role in cell immunity as an inflammatory response initiator: once activated through formation of an inflammasome complex, it initiates a pro-inflammatory response through the cleavage of the two inflammatory cytokines IL1B and IL18, releasing the mature cytokines which are involved in a variety of inflammatory processes. Cleaves a tetrapeptide after an Asp residue at position P1. Also initiates pyroptosis, a programmed lytic cell death pathway, through cleavage of GSDMD. In contrast to cleavage of interleukin IL1B, recognition and cleavage of GSDMD is not strictly dependent on the consensus cleavage site but depends on an exosite interface on CASP1 that recognizes and binds the Gasdermin-D, C-terminal (GSDMD-CT) part. Cleaves and activates CASP7 in response to bacterial infection, promoting plasma membrane repair. Upon inflammasome activation, during DNA virus infection but not RNA virus challenge, controls antiviral immunity through the cleavage of CGAS, rendering it inactive. In apoptotic cells, cleaves SPHK2 which is released from cells and remains enzymatically active extracellularly. The polypeptide is Caspase-1 (Casp1) (Rattus norvegicus (Rat)).